A 537-amino-acid polypeptide reads, in one-letter code: Proline--tRNA ligase (537 aa).

It belongs to the class-II aminoacyl-tRNA synthetase family. ProS type 3 subfamily. In terms of assembly, homodimer.

The protein localises to the cytoplasm. The catalysed reaction is tRNA(Pro) + L-proline + ATP = L-prolyl-tRNA(Pro) + AMP + diphosphate. Functionally, catalyzes the attachment of proline to tRNA(Pro) in a two-step reaction: proline is first activated by ATP to form Pro-AMP and then transferred to the acceptor end of tRNA(Pro). The chain is Proline--tRNA ligase from Nanoarchaeum equitans (strain Kin4-M).